The primary structure comprises 724 residues: MAMLSQPNDGHDHPEKKDPDTTPKQVAGVISSQDPPHPAKDVAEERARTDWDLKEMHEFLEGDEAKSEQILRLYQSIERDPILQTRPEQFDYTQKQERELVANRINQMTKFLETEPYGKFRRRLQLMTVIDPSLGIRMLVNIGLFLNCVRGNGTQKQFDFWSNKKEAGIVKQLYGCFGMTELGHGSNVAGCETTATFDEKTDEFIIDTPHIGATKWWIGGAAHSATHTVCYARLIVKDVDYGVKTFIVPLRDSRHSLLPGIAIGDIGAKMGRQGVDNGWIQFTEVRVPRFFMLQRWCKVDRQGNVTLPPLEQLSYISLLEGRVGMATDSYRIGARYTTIALRYAVGRRQFSKKAGEPETKLIDYTLHQRRLLPYLALTYAAAVGTDRLERQHEELLANLDIALAKKDKLLLKNTITGTKSMFVDSGSLKSTLTWLAADLINETRQACGGHGYSSYNGFGKTYDDWVVQCTWEGDNNVLAMSAGKTIIKTVQQVLNGKELKDSTLEFLNAAPELSKAKKAVIRIRDHVDDVDRVLKAIAGLISKFSKDLIPISYQSWDSIGAQRVILSKLRCHYYLLETFNERLNDKIKAKSPARPHLENIIKLYYVTNILGPFIDEFLRFGVISPQVAKYITYEYPQKLCANIRPYVIGLTDSFQQPDNFINSLIGKYDGNIYTNYLESVKDVNDPSNYKAPYSEALEAMLNRSALENRERSERGKAAADILSK.

The tract at residues 1-48 (MAMLSQPNDGHDHPEKKDPDTTPKQVAGVISSQDPPHPAKDVAEERAR) is disordered. Basic and acidic residues-rich tracts occupy residues 9–21 (DGHDHPEKKDPDT) and 37–48 (HPAKDVAEERAR).

The protein belongs to the acyl-CoA oxidase family. The cofactor is FAD.

Its subcellular location is the peroxisome. It carries out the reaction a 2,3-saturated acyl-CoA + O2 = a (2E)-enoyl-CoA + H2O2. The protein operates within lipid metabolism; peroxisomal fatty acid beta-oxidation. The polypeptide is Acyl-coenzyme A oxidase 2 (POX2) (Candida tropicalis (Yeast)).